A 476-amino-acid chain; its full sequence is Casein kinase 1-like protein 7 (476 aa).

Residues 9–278 form the Protein kinase domain; the sequence is FKLGKKIGSG…LKRLFRDLFI (270 aa). ATP contacts are provided by residues 15–23 and Lys38; that span reads IGSGSFGEL. Asp128 (proton acceptor) is an active-site residue. 2 disordered regions span residues 299–324 and 340–464; these read GSSS…DPIE and PGAV…TRED. A compositionally biased stretch (basic and acidic residues) spans 357–367; it reads PRDRSRSRNSD. Residues 382–422 are compositionally biased toward low complexity; it reads ANSSSRYRASSSRKAVAASSSRPSSAGGPSESRTSSRLVSS. Gly residues predominate over residues 423-432; sequence SGGGGSGSGN.

Belongs to the protein kinase superfamily. CK1 Ser/Thr protein kinase family. Casein kinase I subfamily. Monomer. Autophosphorylated.

The protein resides in the cytoplasm. It carries out the reaction L-seryl-[protein] + ATP = O-phospho-L-seryl-[protein] + ADP + H(+). The enzyme catalyses L-threonyl-[protein] + ATP = O-phospho-L-threonyl-[protein] + ADP + H(+). In terms of biological role, casein kinases are operationally defined by their preferential utilization of acidic proteins such as caseins as substrates. It can phosphorylate a large number of proteins. In Arabidopsis thaliana (Mouse-ear cress), this protein is Casein kinase 1-like protein 7.